Reading from the N-terminus, the 208-residue chain is Peptidyl-prolyl cis-trans isomerase FKBP13, chloroplastic (208 aa).

2 disulfides stabilise this stretch: C84–C96 and C185–C190. Residues 109–208 enclose the PPIase FKBP-type domain; sequence GQLIKAHYVG…LFDIEYIGKA (100 aa).

This sequence belongs to the FKBP-type PPIase family. In terms of assembly, interacts in vitro with LTO1. The precursor, but not the mature form of the protein, interacts with the Rieske protein. In terms of tissue distribution, expressed in stems, leaves and developing flower buds, but not in roots.

It localises to the plastid. It is found in the chloroplast thylakoid lumen. The enzyme catalyses [protein]-peptidylproline (omega=180) = [protein]-peptidylproline (omega=0). With respect to regulation, PPIase activity is optimal in oxidized form (S-S) and minimal in reduced form (SH). Reduction of the oxidized form is mediated by thioredoxin (TRX-M). PPIases accelerate the folding of proteins. It catalyzes the cis-trans isomerization of proline imidic peptide bonds in oligopeptides. Responsive of the major PPIase activity in the chloroplast thylakoid lumen. Regulates the accumulation of Rieske protein, an essential component of the photosynthetic electron transport chain. This Arabidopsis thaliana (Mouse-ear cress) protein is Peptidyl-prolyl cis-trans isomerase FKBP13, chloroplastic.